Consider the following 970-residue polypeptide: Polycystin-2 (970 aa).

A compositionally biased stretch (polar residues) spans 1–11 (MVNSSRVQPQQ). Residues 1 to 182 (MVNSSRVQPQ…GDPLHRHLPL (182 aa)) form a disordered region. The Cytoplasmic segment spans residues 1–221 (MVNSSRVQPQ…STDREKYLKS (221 aa)). A compositionally biased stretch (low complexity) spans 25–45 (GPGRLMAGGAIAGAGLAAPGG). Over residues 47-60 (REQRGLEIEMERIR) the composition is skewed to basic and acidic residues. The segment covering 62–83 (AAARDPPAGASASPSPPLSSCS) has biased composition (low complexity). Residues S76 and S80 each carry the phosphoserine modification. A compositionally biased stretch (acidic residues) spans 95–109 (EAEEEEEEEEVEGEE). The span at 125–138 (RRSASSSAVSSAGA) shows a compositional bias: low complexity. Omega-N-methylarginine is present on R139. Gly residues predominate over residues 139–148 (RGRGLGGYHG). A helical membrane pass occupies residues 222–243 (VLRELATYLLFLIVLCILTYGM). Residues 244 to 470 (MSSSVYYYTR…PVKLIRYVTT (227 aa)) lie on the Extracellular side of the membrane. N-linked (GlcNAc...) asparagine glycosylation is found at N301, N307, and N330. A disulfide bridge connects residues C333 and C346. N364 and N377 each carry an N-linked (GlcNAc...) asparagine glycan. The chain crosses the membrane as a helical span at residues 471-491 (FDFFLAACEIIFCLFILYYVV). At 492–507 (EEILEIRIHKLHYFRS) the chain is on the cytoplasmic side. The chain crosses the membrane as a helical span at residues 508–528 (FWNCLDVVIIVLSVVAIGINI). Topologically, residues 529-554 (YRTSNVEALLQFLEDQNTFPNFENLA) are extracellular. The chain crosses the membrane as a helical span at residues 555-575 (YWQTQFNNIAAVIVFFVWIKL). Q559 provides a ligand contact to cholesterol. Residues 576-599 (FKFINFNRTMSQLSTTMSRCAKDL) lie on the Cytoplasmic side of the membrane. Residues 600–621 (FGFAIMFFIIFLAYAQLAYLVF) form a helical membrane-spanning segment. Residues 622–633 (GTQVDDFSTFQE) are Extracellular-facing. The pore-forming intramembrane region spans 634 to 648 (CIFTQFRIILGDINF). A Ca(2+)-binding site is contributed by L643. The short motif at 643-645 (LGD) is the Selectivity filter element. The Extracellular segment spans residues 649–656 (AEIEEANR). The helical transmembrane segment at 657–677 (VLGPIYFTTFVFFMFFILLNM) threads the bilayer. Residues 678 to 970 (FLAIINDTYS…GGNGSANIHV (293 aa)) lie on the Cytoplasmic side of the membrane. The EF-hand domain maps to 750-785 (KGHTDAEIEAIFTKYDQDGDQELTEHEHQQMRDDLE). Ca(2+) is bound by residues D765, D767, D769, E771, and E776. The tract at residues 766-833 (QDGDQELTEH…HSSRRRGSIS (68 aa)) is disordered. Basic and acidic residues predominate over residues 772-797 (LTEHEHQQMRDDLEKEREDLDLDHSS). The span at 798–809 (LPRPMSSRSFPR) shows a compositional bias: low complexity. Residues S803, S810, S814, and S831 each carry the phosphoserine modification. The segment at 805-824 (RSFPRSLDDSEEEDDDDSGH) is linker. An important for interaction with PACS1 and PACS2 region spans residues 812-823 (DDSEEEDDDDSG). Residues 835-874 (GVSYEEFQVLVRRVDRMEHSIGSIVSKIDAVIVKLEIMER) adopt a coiled-coil conformation. The tract at residues 921 to 970 (DDAASQISHGLGTPLGLNGQPRPRSSRPSSSQSTEGMEGGGGNGSANIHV) is disordered. A compositionally biased stretch (low complexity) spans 940 to 956 (QPRPRSSRPSSSQSTEG).

Belongs to the polycystin family. Homotetramer. Component of the heterotetrameric polycystin channel complex with PKD1; the tetramer contains one PKD1 chain and three PKD2 chains. Isoform 1 interacts with PKD1 while isoform 3 does not. Interacts with PKD1L1; probably forms a Ca(2+) channel. Interacts with CD2AP. Interacts with HAX1. Interacts with NEK8. Part of a complex containing AKAP5, ADCY5, ADCY6 and PDE4C. Interacts (via C-terminus) with TRPV4 (via C-terminus). Interacts (via C-terminal acidic region) with PACS1 and PACS2; these interactions retain the protein in the endoplasmic reticulum and prevent trafficking to the cell membrane. Interacts with TMEM33. Form a heterotetramer with TRPC1 with a 2:2 stoichiometry; has distinct channel properties separate from PKD2 or TRPC1 homomers alone. Interacts with TMEM120A; TMEM120A inhibits PKD2 channel activity through the physical association of PKD2 with TMEM120A. Interacts (via N-terminus) with RYR2; regulates RYR2 channel activity. In terms of processing, N-glycosylated. The four subunits in a tetramer probably differ in the extent of glycosylation; simultaneous glycosylation of all experimentally validated sites would probably create steric hindrance. Post-translationally, phosphorylated. Phosphorylation is important for protein function; a mutant that lacks the N-terminal phosphorylation sites cannot complement a zebrafish pkd2-deficient mutant. PKD-mediated phosphorylation at the C-terminus regulates its function in the release of Ca(2+) stores from the endoplasmic reticulum. Phosphorylation at Ser-814 regulates PKD2 trafficking. Phosphorylation at Ser-76 is required for PKD2 trafficking to or retention at the lateral plasma membrane. Phosphorylation at Ser-803, Ser-814 and Ser-831 regulates PKD2 channel activity. Sumoylated by SUMO1; sumoylation regulates PKD2 membrane recycling and is necessary for intravascular pressure-induced arterial contractility. Expressed in mesenchymally derived structures in the developing embryo at day 12.5. In adult, mostly expressed in kidney.

The protein localises to the cell projection. It is found in the cilium membrane. It localises to the endoplasmic reticulum membrane. The protein resides in the cell membrane. Its subcellular location is the basolateral cell membrane. The protein localises to the cytoplasmic vesicle membrane. It is found in the golgi apparatus. It localises to the vesicle. The protein resides in the secreted. Its subcellular location is the extracellular exosome. The enzyme catalyses K(+)(in) = K(+)(out). The catalysed reaction is Na(+)(in) = Na(+)(out). It catalyses the reaction Ca(2+)(in) = Ca(2+)(out). With respect to regulation, channel activity is regulated by phosphorylation. Channel activity is regulated by intracellular Ca(2+). At the endoplasmic reticulum membrane (ER), TMEM33 enhances its channel activity. TMEM120A inhibits the channel activity of PKD2, and mediates mechanosensitivity of the PKD2-TMEM120A channel complex. PKD1/PKD2 complex on the plasma membrane is activated by PKD1 N-terminus. In terms of biological role, forms a nonselective cation channel. Can function as a homotetrameric ion channel or can form heteromer with PKD1. Displays distinct function depending on its subcellular localization and regulation by its binding partners. Functions as a cation channel, with a preference for monovalent cations over divalent cations that allows K(+), Na(+) and Ca(2+) influx, with low selectivity for Ca(2+). Involved in fluid-flow mechanosensation in the primary cilium in renal epithelium. In the endoplasmic reticulum, likely functions as a K(+) channel to facilitate Ca(2+) release. The heterotetrameric PKD1/PKD2 channel has higher Ca(2+) permeability than homomeric PKD2 channel and acts as a primarily Ca(2+)-permeable channel. Interacts with and acts as a regulator of a number of other channels, such as TRPV4, TRPC1, IP3R, RYR2, ultimately further affecting intracellular signaling, to modulate intracellular Ca(2+) signaling. Together with TRPV4, forms mechano- and thermosensitive channels in cilium. In cardiomyocytes, PKD2 modulates Ca(2+) release from stimulated RYR2 receptors through direct association. Also involved in left-right axis specification via its role in sensing nodal flow; forms a complex with PKD1L1 in cilia to facilitate flow detection in left-right patterning. Acts as a regulator of cilium length together with PKD1. Mediates systemic blood pressure and contributes to the myogenic response in cerebral arteries though vasoconstriction. This Bos taurus (Bovine) protein is Polycystin-2.